The following is a 287-amino-acid chain: Small ribosomal subunit protein uS2 (287 aa).

The segment covering 254-277 (LASATASATPSATASTTALTDAPA) has biased composition (low complexity). The interval 254-287 (LASATASATPSATASTTALTDAPAGATEPTTDAS) is disordered.

This sequence belongs to the universal ribosomal protein uS2 family.

The polypeptide is Small ribosomal subunit protein uS2 (rpsB) (Mycobacterium tuberculosis (strain CDC 1551 / Oshkosh)).